The chain runs to 842 residues: MutS protein homolog him-14 (842 aa).

Residues 1–21 (MYSNKSFQRRQRQQVAESRSE) are disordered. Position 588–595 (588–595 (GPNMAGKS)) interacts with ATP.

It belongs to the DNA mismatch repair MutS family. In terms of assembly, heterooligomer of him-14 and msh-5.

It is found in the nucleus. In terms of biological role, required during the pachytene stage of meiotic prophase for the formation of crossovers between homologous chromosomes. Together with msh-5 and zhp-3 plays a role in the activation of DNA damage-dependent apoptosis at the DNA damage checkpoint in pachytene cells. Not needed for pairing or synapsis. May promote crossing over by interfering with Holliday junction branch migration. Has no apparent role in DNA mismatch repair. This chain is MutS protein homolog him-14, found in Caenorhabditis elegans.